The sequence spans 179 residues: Translation initiation factor IF-3 (179 aa).

This sequence belongs to the IF-3 family. In terms of assembly, monomer.

The protein resides in the cytoplasm. Its function is as follows. IF-3 binds to the 30S ribosomal subunit and shifts the equilibrium between 70S ribosomes and their 50S and 30S subunits in favor of the free subunits, thus enhancing the availability of 30S subunits on which protein synthesis initiation begins. The sequence is that of Translation initiation factor IF-3 from Leptospira interrogans serogroup Icterohaemorrhagiae serovar copenhageni (strain Fiocruz L1-130).